The chain runs to 326 residues: Undecaprenyl-phosphate 4-deoxy-4-formamido-L-arabinose transferase (326 aa).

Residues 1 to 235 (MFEIHPIKKV…TCLTTTPLRM (235 aa)) lie on the Cytoplasmic side of the membrane. A helical transmembrane segment spans residues 236–256 (LSLLGSIIATSGFSLAILLVV). At 257–269 (LRLAFGSQWSGEG) the chain is on the periplasmic side. Residues 270-290 (VFMLFAVLFTFIGAQFIGMGL) traverse the membrane as a helical segment. Topologically, residues 291–326 (LGEYIGRIYNDVRARPRYFVQKVIRPASSIDIEENH) are cytoplasmic.

Belongs to the glycosyltransferase 2 family.

It is found in the cell inner membrane. It carries out the reaction UDP-4-deoxy-4-formamido-beta-L-arabinose + di-trans,octa-cis-undecaprenyl phosphate = 4-deoxy-4-formamido-alpha-L-arabinopyranosyl di-trans,octa-cis-undecaprenyl phosphate + UDP. It participates in glycolipid biosynthesis; 4-amino-4-deoxy-alpha-L-arabinose undecaprenyl phosphate biosynthesis; 4-amino-4-deoxy-alpha-L-arabinose undecaprenyl phosphate from UDP-4-deoxy-4-formamido-beta-L-arabinose and undecaprenyl phosphate: step 1/2. The protein operates within bacterial outer membrane biogenesis; lipopolysaccharide biosynthesis. Catalyzes the transfer of 4-deoxy-4-formamido-L-arabinose from UDP to undecaprenyl phosphate. The modified arabinose is attached to lipid A and is required for resistance to polymyxin and cationic antimicrobial peptides. This is Undecaprenyl-phosphate 4-deoxy-4-formamido-L-arabinose transferase from Escherichia fergusonii (strain ATCC 35469 / DSM 13698 / CCUG 18766 / IAM 14443 / JCM 21226 / LMG 7866 / NBRC 102419 / NCTC 12128 / CDC 0568-73).